A 504-amino-acid chain; its full sequence is uncharacterized protein (504 aa).

The disordered stretch occupies residues 36-60 (TAFRMEKEQRLPSQNKPPRGRRRPD). In terms of domain architecture, Integrase catalytic spans 125–309 (QTHEPGRLGL…RPHLQVLPER (185 aa)).

This is an uncharacterized protein from Sinorhizobium fredii (strain NBRC 101917 / NGR234).